A 68-amino-acid polypeptide reads, in one-letter code: Lividin-1 (68 aa).

Positions 1–22 (MFTLKKSLLLLFFLGTINLSLC) are cleaved as a signal peptide. A propeptide spanning residues 23-42 (QEERNADEEERRDERNVEVE) is cleaved from the precursor. Residues C62 and C68 are joined by a disulfide bond.

Expressed by the skin glands.

The protein localises to the secreted. Antimicrobial peptide. The sequence is that of Lividin-1 from Odorrana livida (Green mountain frog).